A 676-amino-acid chain; its full sequence is RNA helicase NPH-II (676 aa).

Residues 172 to 347 (FSAWISHRPV…VFLPNPAFIH (176 aa)) form the Helicase ATP-binding domain. 185–192 (GGTGVGKT) is a binding site for ATP. The short motif at 296-299 (DEVH) is the DEXH box element. The Helicase C-terminal domain occupies 366-535 (NPSSRMAYIE…NYILYANKFN (170 aa)).

The protein belongs to the DEAD box helicase family. DEAH subfamily. In terms of assembly, monomer.

It is found in the virion. It catalyses the reaction ATP + H2O = ADP + phosphate + H(+). Functionally, NTP-dependent helicase that catalyzes unidirectional unwinding of 3'tailed duplex RNAs and plays an important role during transcription of early mRNAs, presumably by preventing R-loop formation behind the elongating RNA polymerase. Might also play a role in the export of newly synthesized mRNA chains out of the core into the cytoplasm. Required for replication and propagation of viral particles. The chain is RNA helicase NPH-II (OPG084) from Bos taurus (Bovine).